The chain runs to 74 residues: Sec-independent protein translocase protein TatA (74 aa).

Residues 1 to 21 (MGTFSIWHWLIVLLVVVVVFG) traverse the membrane as a helical segment. The interval 50–74 (TAPAGQVANQSTADQTIDVQTKPKG) is disordered. Residues 56–68 (VANQSTADQTIDV) show a composition bias toward polar residues.

Belongs to the TatA/E family. In terms of assembly, the Tat system comprises two distinct complexes: a TatABC complex, containing multiple copies of TatA, TatB and TatC subunits, and a separate TatA complex, containing only TatA subunits. Substrates initially bind to the TatABC complex, which probably triggers association of the separate TatA complex to form the active translocon.

It is found in the cell inner membrane. Functionally, part of the twin-arginine translocation (Tat) system that transports large folded proteins containing a characteristic twin-arginine motif in their signal peptide across membranes. TatA could form the protein-conducting channel of the Tat system. This is Sec-independent protein translocase protein TatA from Verminephrobacter eiseniae (strain EF01-2).